Consider the following 535-residue polypeptide: EH domain-containing protein 3 (535 aa).

M1 is subject to N-acetylmethionine. Residues 55–286 enclose the Dynamin-type G domain; it reads FDNKPMVLLV…DLFRDIQSLP (232 aa). The tract at residues 65–72 is G1 motif; sequence GQYSTGKT. 65 to 72 lines the ATP pocket; that stretch reads GQYSTGKT. The tract at residues 91–92 is G2 motif; sequence EP. Positions 153–156 are G3 motif; that stretch reads DTPG. Residues 198-227 adopt a coiled-coil conformation; the sequence is DEFSEVIKALKNHEDKMRVVLNKADQIETQ. Positions 219–222 are G4 motif; sequence NKAD. Residue K220 participates in ATP binding. I243 is a region of interest (G5 motif). W258 serves as a coordination point for ATP. A Glycyl lysine isopeptide (Lys-Gly) (interchain with G-Cter in SUMO) cross-link involves residue K315. Phosphoserine occurs at positions 349 and 456. The EH domain maps to 444 to 532; sequence DKPMYDEIFY…AHLLPPSKRK (89 aa). Positions 476 to 511 constitute an EF-hand domain; it reads LPNSVLGKIWKLADIDKDGMLDDEEFALANHLIKVK. Residues D489, D491, D493, M495, and E500 each contribute to the Ca(2+) site. Residue K511 forms a Glycyl lysine isopeptide (Lys-Gly) (interchain with G-Cter in SUMO) linkage.

Belongs to the TRAFAC class dynamin-like GTPase superfamily. Dynamin/Fzo/YdjA family. EHD subfamily. Homooligomer. Heterooligomer with EHD1. Heterooligomer with EHD2 and EHD4; ATP-binding is required for heterooligomerization. Interacts with PACSIN1. Interacts with PACSIN2. Interacts (via EH domain) with MICALL1. Interacts (via EH domain) with RAB11FIP2. Interacts with ANK2. Interacts with CACNA1GG and CACNA1H. Strong expression seen in the kidney, brain and liver. In the kidney, expressed exclusively by glomerular endothelial cells; at protein level. Expressed in skeletal muscle neuromuscular junction perisynaptic region; at protein level.

Its subcellular location is the recycling endosome membrane. The protein localises to the cell membrane. The protein resides in the cell projection. It localises to the cilium membrane. It is found in the cytoplasmic vesicle. Its function is as follows. ATP- and membrane-binding protein that controls membrane reorganization/tubulation upon ATP hydrolysis. In vitro causes tubulation of endocytic membranes. Binding to phosphatidic acid induces its membrane tubulation activity. Plays a role in endocytic transport. Involved in early endosome to recycling endosome compartment (ERC), retrograde early endosome to Golgi, and endosome to plasma membrane (rapid recycling) protein transport. Involved in the regulation of Golgi maintenance and morphology. Involved in the recycling of internalized D1 dopamine receptor. Plays a role in cardiac protein trafficking probably implicating ANK2. Involved in the ventricular membrane targeting of SLC8A1 and CACNA1C and probably the atrial membrane localization of CACNA1GG and CACNA1H implicated in the regulation of atrial myocyte excitability and cardiac conduction. In conjunction with EHD4 may be involved in endocytic trafficking of KDR/VEGFR2 implicated in control of glomerular function. Involved in the rapid recycling of integrin beta-3 implicated in cell adhesion maintenance. Involved in the unidirectional retrograde dendritic transport of endocytosed BACE1 and in efficient sorting of BACE1 to axons implicating a function in neuronal APP processing. Plays a role in the formation of the ciliary vesicle, an early step in cilium biogenesis; possibly sharing redundant functions with Ehd1. In Mus musculus (Mouse), this protein is EH domain-containing protein 3.